The primary structure comprises 215 residues: Adenylate kinase (215 aa).

G10–T15 is a binding site for ATP. The tract at residues S30–V59 is NMP. AMP contacts are provided by residues T31, R36, Q57–V59, G85–R88, and Q92. An LID region spans residues G122–D159. ATP-binding positions include R123 and V132–Y133. Residues G128–E151 form a disordered region. The span at Y133–G144 shows a compositional bias: basic and acidic residues. AMP is bound by residues R156 and R167. A disordered region spans residues K195–K215. Residue Q200 participates in ATP binding.

This sequence belongs to the adenylate kinase family. Monomer.

The protein resides in the cytoplasm. It catalyses the reaction AMP + ATP = 2 ADP. It functions in the pathway purine metabolism; AMP biosynthesis via salvage pathway; AMP from ADP: step 1/1. Its function is as follows. Catalyzes the reversible transfer of the terminal phosphate group between ATP and AMP. Plays an important role in cellular energy homeostasis and in adenine nucleotide metabolism. The polypeptide is Adenylate kinase (Idiomarina loihiensis (strain ATCC BAA-735 / DSM 15497 / L2-TR)).